Here is a 324-residue protein sequence, read N- to C-terminus: Large ribosomal subunit protein uL3m (324 aa).

The transit peptide at 1–41 (MAAVPRGLLSRINQFLSIRSITPSSSESLPHCSSFFLIRRF) directs the protein to the mitochondrion. A disordered region spans residues 206-229 (PASHGASLSHRSGGSTGQRDAPGK).

This sequence belongs to the universal ribosomal protein uL3 family. In terms of assembly, part of the 50S ribosomal subunit.

The protein resides in the mitochondrion. Functionally, one of the primary rRNA binding proteins, it binds directly near the 3'-end of the 23S rRNA, where it nucleates assembly of the 50S subunit. This is Large ribosomal subunit protein uL3m from Arabidopsis thaliana (Mouse-ear cress).